The sequence spans 202 residues: Glycerol-3-phosphate acyltransferase (202 aa).

6 helical membrane-spanning segments follow: residues 2 to 22 (MIVI…GYVI), 54 to 74 (FLVT…PLWL), 88 to 108 (NGLI…YLGF), 120 to 140 (VILG…FGIL), 141 to 161 (YLTK…VIGA), and 162 to 182 (LLIR…LLII).

This sequence belongs to the PlsY family. Probably interacts with PlsX.

It localises to the cell membrane. The catalysed reaction is an acyl phosphate + sn-glycerol 3-phosphate = a 1-acyl-sn-glycero-3-phosphate + phosphate. It functions in the pathway lipid metabolism; phospholipid metabolism. Functionally, catalyzes the transfer of an acyl group from acyl-phosphate (acyl-PO(4)) to glycerol-3-phosphate (G3P) to form lysophosphatidic acid (LPA). This enzyme utilizes acyl-phosphate as fatty acyl donor, but not acyl-CoA or acyl-ACP. The polypeptide is Glycerol-3-phosphate acyltransferase (Staphylococcus saprophyticus subsp. saprophyticus (strain ATCC 15305 / DSM 20229 / NCIMB 8711 / NCTC 7292 / S-41)).